A 101-amino-acid chain; its full sequence is Small nuclear ribonucleoprotein Sm D3 (101 aa).

A Sm domain is found at 6-78; it reads IPVKLLNEAQ…IKFIVVPDLL (73 aa).

The protein belongs to the snRNP core protein family. As to quaternary structure, component of the Sm core complex, present in spliceosomal snRNP U1, U2, U4/U6 and U5. The core complex contains SMB1, SMD1, SMD2, SMD3, SME1, SMX3 and SMX2 (Sm proteins B, D1, D2, D3, E, F and G, respectively), and is probably a heptameric ring structure. SMD3 specifically interacts with SMB1. Belongs to the CWC complex (or CEF1-associated complex), a spliceosome sub-complex reminiscent of a late-stage spliceosome composed of the U2, U5 and U6 snRNAs and at least BUD13, BUD31, BRR2, CDC40, CEF1, CLF1, CUS1, CWC2, CWC15, CWC21, CWC22, CWC23, CWC24, CWC25, CWC27, ECM2, HSH155, IST3, ISY1, LEA1, MSL1, NTC20, PRP8, PRP9, PRP11, PRP19, PRP21, PRP22, PRP45, PRP46, SLU7, SMB1, SMD1, SMD2, SMD3, SMX2, SMX3, SNT309, SNU114, SPP2, SYF1, SYF2, RSE1 and YJU2. Component of the U4/U6-U5 tri-snRNP complex composed of the U4, U6 and U5 snRNAs and at least PRP3, PRP4, PRP6, PRP8, PRP18, PRP31, PRP38, SNU13, SNU23, SNU66, SNU114, SPP381, SMB1, SMD1, SMD2, SMD3, SMX2, SMX3, LSM2, LSM3, LSM4, LSM5, LSM6, LSM7, LSM8, BRR2 and DIB1.

The protein localises to the cytoplasm. It localises to the cytosol. The protein resides in the nucleus. Plays a role in pre-mRNA splicing as a core component of the spliceosomal U1, U2, U4 and U5 small nuclear ribonucleoproteins (snRNPs), the building blocks of the spliceosome. Also binds telomerase RNA and is required for its accumulation. This chain is Small nuclear ribonucleoprotein Sm D3 (SMD3), found in Saccharomyces cerevisiae (strain ATCC 204508 / S288c) (Baker's yeast).